The sequence spans 410 residues: Peptidase T (410 aa).

A Zn(2+)-binding site is contributed by His79. Asp81 is a catalytic residue. Asp142 is a Zn(2+) binding site. Glu176 (proton acceptor) is an active-site residue. Residues Glu177, Asp199, and His381 each contribute to the Zn(2+) site.

This sequence belongs to the peptidase M20B family. It depends on Zn(2+) as a cofactor.

Its subcellular location is the cytoplasm. It carries out the reaction Release of the N-terminal residue from a tripeptide.. Its function is as follows. Cleaves the N-terminal amino acid of tripeptides. In Listeria welshimeri serovar 6b (strain ATCC 35897 / DSM 20650 / CCUG 15529 / CIP 8149 / NCTC 11857 / SLCC 5334 / V8), this protein is Peptidase T.